The sequence spans 232 residues: MENQPKLNSSKEVIAFLAERFPHCFSAEGEARPLKIGIFQDLVDRVAGEMNLSKTQLRSALRLYTSSWRYLYGVKPGATRVDLDGNPCGELDEQHVEHARKQLEEAKARVQAQRAEQQAKKREAAAAAGEKEDAPRRERKPRPTTPRRKEGAERKPRSQKPVEKAPKTVKAPREEQHTPVSDISALTVGQALKVKAGQNAMDATVLEITKDGVRVQLNSGMSLIVRAEHLVF.

A disordered region spans residues 105–182 (EAKARVQAQR…REEQHTPVSD (78 aa)). Positions 117-136 (QQAKKREAAAAAGEKEDAPR) are enriched in basic and acidic residues. Basic residues predominate over residues 137–146 (RERKPRPTTP). Over residues 147-177 (RRKEGAERKPRSQKPVEKAPKTVKAPREEQH) the composition is skewed to basic and acidic residues.

Belongs to the ProQ family.

Its subcellular location is the cytoplasm. Its function is as follows. RNA chaperone with significant RNA binding, RNA strand exchange and RNA duplexing activities. May regulate ProP activity through an RNA-based, post-transcriptional mechanism. The sequence is that of RNA chaperone ProQ from Escherichia coli (strain UTI89 / UPEC).